The primary structure comprises 367 residues: tRNA pseudouridine synthase D (367 aa).

Asp78 (nucleophile) is an active-site residue. The 148-residue stretch at 153-300 (GVPNYFGEQR…KQERRRIRLT (148 aa)) folds into the TRUD domain.

Belongs to the pseudouridine synthase TruD family.

It catalyses the reaction uridine(13) in tRNA = pseudouridine(13) in tRNA. Functionally, responsible for synthesis of pseudouridine from uracil-13 in transfer RNAs. The polypeptide is tRNA pseudouridine synthase D (Colwellia psychrerythraea (strain 34H / ATCC BAA-681) (Vibrio psychroerythus)).